Consider the following 118-residue polypeptide: Small ribosomal subunit protein uS13 (118 aa).

The disordered stretch occupies residues 94 to 118 (SLPLRGQRTKTNARTRKGPRKPIKK).

Belongs to the universal ribosomal protein uS13 family. As to quaternary structure, part of the 30S ribosomal subunit. Forms a loose heterodimer with protein S19. Forms two bridges to the 50S subunit in the 70S ribosome.

In terms of biological role, located at the top of the head of the 30S subunit, it contacts several helices of the 16S rRNA. In the 70S ribosome it contacts the 23S rRNA (bridge B1a) and protein L5 of the 50S subunit (bridge B1b), connecting the 2 subunits; these bridges are implicated in subunit movement. Contacts the tRNAs in the A and P-sites. In Idiomarina loihiensis (strain ATCC BAA-735 / DSM 15497 / L2-TR), this protein is Small ribosomal subunit protein uS13.